The primary structure comprises 326 residues: Palmitoyltransferase SWF1 (326 aa).

Residue Met1 is a topological domain, lumenal. A helical transmembrane segment spans residues 2-22 (MGALCALAVTQAGLILAAPAL). At 23 to 49 (RAYWPFSWYYHVVFRTVLQDTQRHRWK) the chain is on the cytoplasmic side. A helical membrane pass occupies residues 50–70 (YWATPAFYAGVYAYCVWLFYG). Topologically, residues 71–85 (EVYAEIAKALWVPER) are lumenal. Residues 86–106 (WVLPAAVVAPAAAGVAAAATP) traverse the membrane as a helical segment. The Cytoplasmic portion of the chain corresponds to 107 to 164 (AAVPADAAYDGLLFHDGVECRTCRVRKPARSRHCGVCGRCVPLADHHCVWLNNCVGRG). Residues 124 to 174 (VECRTCRVRKPARSRHCGVCGRCVPLADHHCVWLNNCVGRGNYGLFYLALG) form the DHHC domain. Residues 165-185 (NYGLFYLALGAHCALLTYGAV) traverse the membrane as a helical segment. At 186-198 (RLPLAAPAGRWPR) the chain is on the lumenal side. A helical transmembrane segment spans residues 199–219 (ALLALELLVASFAVLCVWFTA). Residues 220–326 (TQVALVRDGM…RIFRRRVRGL (107 aa)) are Cytoplasmic-facing.

It belongs to the DHHC palmitoyltransferase family. SWF1 subfamily.

It localises to the endoplasmic reticulum membrane. The enzyme catalyses L-cysteinyl-[protein] + hexadecanoyl-CoA = S-hexadecanoyl-L-cysteinyl-[protein] + CoA. Its function is as follows. Palmitoyltransferase that targets several endosomal SNAREs. Palmitoylates the SNAREs at cysteine residues close to the cytoplasmic end of their transmembrane domain. May have a role in the cellular quality control of transmembrane domain-containing proteins. The protein is Palmitoyltransferase SWF1 (SWF1) of Eremothecium gossypii (strain ATCC 10895 / CBS 109.51 / FGSC 9923 / NRRL Y-1056) (Yeast).